We begin with the raw amino-acid sequence, 752 residues long: Putative xanthine dehydrogenase molybdenum-binding subunit XdhA (752 aa).

Residues glutamine 206, phenylalanine 237, arginine 350, and alanine 516 each coordinate Mo-molybdopterin.

It belongs to the xanthine dehydrogenase family. In terms of assembly, heterotrimer of XdhA, XdhB and XdhC. It depends on Mo-molybdopterin as a cofactor.

The catalysed reaction is xanthine + NAD(+) + H2O = urate + NADH + H(+). It carries out the reaction hypoxanthine + NAD(+) + H2O = xanthine + NADH + H(+). The protein operates within purine metabolism; hypoxanthine degradation; urate from hypoxanthine: step 1/2. It participates in purine metabolism; hypoxanthine degradation; urate from hypoxanthine: step 2/2. In terms of biological role, presumed to be a dehydrogenase, but possibly an oxidase. Participates in limited purine salvage (requires aspartate) but does not support aerobic growth on purines as the sole carbon source (purine catabolism). Deletion results in increased adenine sensitivity, suggesting that this protein contributes to the conversion of adenine to guanine nucleotides during purine salvage. This is Putative xanthine dehydrogenase molybdenum-binding subunit XdhA (xdhA) from Escherichia coli (strain K12).